The following is a 387-amino-acid chain: tRNA-specific 2-thiouridylase MnmA (387 aa).

Residues Ala6–Ser13 and Leu32 contribute to the ATP site. Cys101 acts as the Nucleophile in catalysis. Cys101 and Cys199 are joined by a disulfide. Gly125 lines the ATP pocket. The interaction with tRNA stretch occupies residues Lys148–Gln150. Cys199 acts as the Cysteine persulfide intermediate in catalysis.

This sequence belongs to the MnmA/TRMU family.

It localises to the cytoplasm. The enzyme catalyses S-sulfanyl-L-cysteinyl-[protein] + uridine(34) in tRNA + AH2 + ATP = 2-thiouridine(34) in tRNA + L-cysteinyl-[protein] + A + AMP + diphosphate + H(+). Its function is as follows. Catalyzes the 2-thiolation of uridine at the wobble position (U34) of tRNA, leading to the formation of s(2)U34. The protein is tRNA-specific 2-thiouridylase MnmA of Clavibacter michiganensis subsp. michiganensis (strain NCPPB 382).